A 380-amino-acid chain; its full sequence is Mitogen-activated protein kinase 3 (380 aa).

At Ala-2 the chain carries N-acetylalanine. In terms of domain architecture, Protein kinase spans 43–331 (YTQLQYIGEG…VEEALAHPYL (289 aa)). ATP contacts are provided by residues 49–57 (IGEGAYGMV) and Lys-72. The active-site Proton acceptor is Asp-167. Residue Thr-199 is modified to Phosphothreonine. A Phosphothreonine; by MAP2K1 and MAP2K2 modification is found at Thr-203. A TXY motif is present at residues 203–205 (TEY). Tyr-205 carries the post-translational modification Phosphotyrosine; by MAP2K1 and MAP2K2. Thr-208 carries the phosphothreonine; by autocatalysis modification.

It belongs to the protein kinase superfamily. CMGC Ser/Thr protein kinase family. MAP kinase subfamily. As to quaternary structure, binds both upstream activators and downstream substrates in multimolecular complexes. Found in a complex with at least BRAF, HRAS, MAP2K1/MEK1, MAPK3 and RGS14. Interacts with ADAM15, ARRB2, CANX, DAPK1 (via death domain), HSF4, IER3, MAP2K1/MEK1, MORG1, NISCH, PEA15, SGK1 and MKNK2. MKNK2 isoform 1 binding prevents from dephosphorylation and inactivation. Interacts with TPR. Interacts with HSF1 (via D domain and preferentially with hyperphosphorylated form); this interaction occurs upon heat shock. Interacts with CDKN2AIP. Interacts with CAVIN4. Interacts with GIT1; this interaction is necessary for MAPK3 localization to focal adhesions. Interacts with ZNF263. Interacts with EBF4. Mg(2+) is required as a cofactor. In terms of processing, phosphorylated upon FLT3 and KIT signaling. Ligand-activated ALK induces tyrosine phosphorylation. Dephosphorylated by PTPRJ at Tyr-205. Dually phosphorylated on Thr-203 and Tyr-205, which activates the enzyme. Post-translationally, ubiquitinated by TRIM15 via 'Lys-63'-linked ubiquitination; leading to activation. Deubiquitinated by CYLD. Highest levels within the nervous system, expressed in different tissues, mostly in intestine, placenta and lung.

The protein resides in the cytoplasm. It is found in the nucleus. It localises to the membrane. The protein localises to the caveola. Its subcellular location is the cell junction. The protein resides in the focal adhesion. It catalyses the reaction L-seryl-[protein] + ATP = O-phospho-L-seryl-[protein] + ADP + H(+). It carries out the reaction L-threonyl-[protein] + ATP = O-phospho-L-threonyl-[protein] + ADP + H(+). Its activity is regulated as follows. Phosphorylated by MAP2K1/MEK1 and MAP2K2/MEK2 on Thr-203 and Tyr-205 in response to external stimuli like insulin or NGF. Both phosphorylations are required for activity. This phosphorylation causes dramatic conformational changes, which enable full activation and interaction of MAPK1/ERK2 with its substrates. Dephosphorylated and inactivated by DUSP3, DUSP6 and DUSP9. In terms of biological role, serine/threonine kinase which acts as an essential component of the MAP kinase signal transduction pathway. MAPK1/ERK2 and MAPK3/ERK1 are the 2 MAPKs which play an important role in the MAPK/ERK cascade. They participate also in a signaling cascade initiated by activated KIT and KITLG/SCF. Depending on the cellular context, the MAPK/ERK cascade mediates diverse biological functions such as cell growth, adhesion, survival and differentiation through the regulation of transcription, translation, cytoskeletal rearrangements. The MAPK/ERK cascade also plays a role in initiation and regulation of meiosis, mitosis, and postmitotic functions in differentiated cells by phosphorylating a number of transcription factors. About 160 substrates have already been discovered for ERKs. Many of these substrates are localized in the nucleus, and seem to participate in the regulation of transcription upon stimulation. However, other substrates are found in the cytosol as well as in other cellular organelles, and those are responsible for processes such as translation, mitosis and apoptosis. Moreover, the MAPK/ERK cascade is also involved in the regulation of the endosomal dynamics, including lysosome processing and endosome cycling through the perinuclear recycling compartment (PNRC); as well as in the fragmentation of the Golgi apparatus during mitosis. The substrates include transcription factors (such as ATF2, BCL6, ELK1, ERF, FOS, HSF4 or SPZ1), cytoskeletal elements (such as CANX, CTTN, GJA1, MAP2, MAPT, PXN, SORBS3 or STMN1), regulators of apoptosis (such as BAD, BTG2, CASP9, DAPK1, IER3, MCL1 or PPARG), regulators of translation (such as EIF4EBP1) and a variety of other signaling-related molecules (like ARHGEF2, DEPTOR, FRS2 or GRB10). Protein kinases (such as RAF1, RPS6KA1/RSK1, RPS6KA3/RSK2, RPS6KA2/RSK3, RPS6KA6/RSK4, SYK, MKNK1/MNK1, MKNK2/MNK2, RPS6KA5/MSK1, RPS6KA4/MSK2, MAPKAPK3 or MAPKAPK5) and phosphatases (such as DUSP1, DUSP4, DUSP6 or DUSP16) are other substrates which enable the propagation the MAPK/ERK signal to additional cytosolic and nuclear targets, thereby extending the specificity of the cascade. This chain is Mitogen-activated protein kinase 3 (Mapk3), found in Rattus norvegicus (Rat).